Reading from the N-terminus, the 90-residue chain is Small ribosomal subunit protein bS16 (90 aa).

This sequence belongs to the bacterial ribosomal protein bS16 family.

The polypeptide is Small ribosomal subunit protein bS16 (Bacillus cytotoxicus (strain DSM 22905 / CIP 110041 / 391-98 / NVH 391-98)).